The chain runs to 282 residues: Putative dolichyldiphosphatase (282 aa).

Helical transmembrane passes span 26–46 (LLCA…ATLI) and 93–113 (MPSS…LFLL). The tract at residues 121–153 (QQQQQQQKQKQRERKKQVTNVKTTTTNGSGNGS) is disordered. The segment covering 138–148 (VTNVKTTTTNG) has biased composition (low complexity). 2 consecutive transmembrane segments (helical) span residues 173–193 (WSFA…GAVA) and 207–227 (VLVG…VTHV).

The protein belongs to the dolichyldiphosphatase family.

The protein resides in the endoplasmic reticulum membrane. It catalyses the reaction a di-trans,poly-cis-dolichyl diphosphate + H2O = a di-trans,poly-cis-dolichyl phosphate + phosphate + H(+). It functions in the pathway protein modification; protein glycosylation. The polypeptide is Putative dolichyldiphosphatase (Neurospora crassa (strain ATCC 24698 / 74-OR23-1A / CBS 708.71 / DSM 1257 / FGSC 987)).